Consider the following 364-residue polypeptide: Deoxyribonuclease-2-alpha (364 aa).

The first 21 residues, 1 to 21 (MATLSPLLLAALLWVPVGTLT), serve as a signal peptide directing secretion. Residues C22 and C161 are joined by a disulfide bond. Residues N72, N88, N171, N214, N268, and N292 are each glycosylated (N-linked (GlcNAc...) asparagine). 2 cysteine pairs are disulfide-bonded: C269/C349 and C310/C329. The active site involves H297.

The protein belongs to the DNase II family.

It is found in the lysosome. It carries out the reaction Endonucleolytic cleavage to nucleoside 3'-phosphates and 3'-phosphooligonucleotide end-products.. Hydrolyzes DNA under acidic conditions with a preference for double-stranded DNA. Plays a major role in the clearance of nucleic acids generated through apoptosis, hence preventing autoinflammation. Necessary for proper fetal development and for definitive erythropoiesis in fetal liver and bone marrow, where it degrades nuclear DNA expelled from erythroid precursor cells. The polypeptide is Deoxyribonuclease-2-alpha (DNASE2) (Sus scrofa (Pig)).